Reading from the N-terminus, the 555-residue chain is DNA ligase (555 aa).

Residue glutamate 247 coordinates ATP. Residue lysine 249 is the N6-AMP-lysine intermediate of the active site. 6 residues coordinate ATP: arginine 254, arginine 269, glutamate 298, phenylalanine 337, arginine 411, and lysine 417.

It belongs to the ATP-dependent DNA ligase family. The cofactor is Mg(2+).

It carries out the reaction ATP + (deoxyribonucleotide)n-3'-hydroxyl + 5'-phospho-(deoxyribonucleotide)m = (deoxyribonucleotide)n+m + AMP + diphosphate.. Its function is as follows. DNA ligase that seals nicks in double-stranded DNA during DNA replication, DNA recombination and DNA repair. The polypeptide is DNA ligase (Archaeoglobus fulgidus (strain ATCC 49558 / DSM 4304 / JCM 9628 / NBRC 100126 / VC-16)).